The chain runs to 185 residues: Large ribosomal subunit protein uL5 (185 aa).

Belongs to the universal ribosomal protein uL5 family. As to quaternary structure, part of the 50S ribosomal subunit; part of the 5S rRNA/L5/L18/L25 subcomplex. Contacts the 5S rRNA and the P site tRNA. Forms a bridge to the 30S subunit in the 70S ribosome.

This is one of the proteins that bind and probably mediate the attachment of the 5S RNA into the large ribosomal subunit, where it forms part of the central protuberance. In the 70S ribosome it contacts protein S13 of the 30S subunit (bridge B1b), connecting the 2 subunits; this bridge is implicated in subunit movement. Contacts the P site tRNA; the 5S rRNA and some of its associated proteins might help stabilize positioning of ribosome-bound tRNAs. This Brucella abortus (strain S19) protein is Large ribosomal subunit protein uL5.